The primary structure comprises 339 residues: Protein FAM131B (339 aa).

Residues 1-22 form a disordered region; sequence MDSTSSLHGSSLHRPSTEQTRT. 3 positions are modified to phosphoserine: Ser-47, Ser-114, and Ser-117. The segment at 222–339 is disordered; it reads GPAFGDSQPS…PLLTQPSTPA (118 aa). Composition is skewed to polar residues over residues 239–250 and 324–339; these read QPASGYSAQEPS and PTTS…STPA. Thr-325 is modified (phosphothreonine). Ser-327 carries the phosphoserine modification.

It belongs to the FAM131 family.

The protein is Protein FAM131B (FAM131B) of Bos taurus (Bovine).